Reading from the N-terminus, the 413-residue chain is uncharacterized protein (413 aa).

Residues 14–34 traverse the membrane as a helical segment; it reads LLFFTVVIIPIFYYIYKIVYL. N-linked (GlcNAc...) asparagine; by host glycans are attached at residues Asn46, Asn55, Asn103, Asn171, Asn179, Asn184, Asn220, Asn252, Asn260, Asn273, Asn362, Asn366, Asn374, Asn378, Asn393, and Asn408. The segment covering 250–263 has biased composition (low complexity); that stretch reads TKNSTETNSDNNSE. Residues 250-277 form a disordered region; it reads TKNSTETNSDNNSEIVSETNSETNYSTP. The segment covering 264–277 has biased composition (polar residues); it reads IVSETNSETNYSTP.

The protein localises to the membrane. This is an uncharacterized protein from Acanthamoeba polyphaga (Amoeba).